A 248-amino-acid chain; its full sequence is Ras-related protein RSR1 (248 aa).

Position 10-17 (10-17 (GAGGVGKS)) interacts with GTP. The Effector region signature appears at 32–40 (YDPTIEDSY). GTP-binding positions include 57–61 (DTAGV) and 116–119 (NKCD). The interval 182–248 (LQKQQQQQQQ…SSGSKFCTII (67 aa)) is disordered. The segment covering 184-214 (KQQQQQQQEQDAEGQQQQQKSGKSKSSATQK) has biased composition (low complexity). Polar residues-rich tracts occupy residues 219–231 (DGQT…LKQS) and 238–248 (SSSGSKFCTII). At Cys-245 the chain carries Cysteine methyl ester. Cys-245 carries the S-geranylgeranyl cysteine lipid modification. A propeptide spans 246 to 248 (TII) (removed in mature form).

The protein belongs to the small GTPase superfamily. Ras family.

It is found in the cell membrane. It carries out the reaction GTP + H2O = GDP + phosphate + H(+). With respect to regulation, alternates between an inactive form bound to GDP and an active form bound to GTP. Activated by a guanine nucleotide-exchange factor (GEF) and inactivated by a GTPase-activating protein (GAP). Functionally, ras-related protein which binds GDP/GTP and possesses intrinsic GTPase activity. Involved in both yeast and hypha development. In the yeast phase, it is required for normal (polar) bud site selection and is involved in cell morphogenesis; in the yeast-mycelial transition it is involved in germ tube emergence; and in the development of the hyphae it is involved in cell elongation. This Candida albicans (Yeast) protein is Ras-related protein RSR1 (RSR1).